A 355-amino-acid chain; its full sequence is tRNA N6-adenosine threonylcarbamoyltransferase (355 aa).

His110 and His114 together coordinate Fe cation. Substrate contacts are provided by residues 132-136 (LVSGG), Asp165, Gly178, Asp182, and Asn288. Asp316 contacts Fe cation.

The protein belongs to the KAE1 / TsaD family. Fe(2+) serves as cofactor.

It is found in the cytoplasm. It carries out the reaction L-threonylcarbamoyladenylate + adenosine(37) in tRNA = N(6)-L-threonylcarbamoyladenosine(37) in tRNA + AMP + H(+). Its function is as follows. Required for the formation of a threonylcarbamoyl group on adenosine at position 37 (t(6)A37) in tRNAs that read codons beginning with adenine. Is involved in the transfer of the threonylcarbamoyl moiety of threonylcarbamoyl-AMP (TC-AMP) to the N6 group of A37, together with TsaE and TsaB. TsaD likely plays a direct catalytic role in this reaction. In Lawsonia intracellularis (strain PHE/MN1-00), this protein is tRNA N6-adenosine threonylcarbamoyltransferase.